The chain runs to 198 residues: Na(+)-translocating NADH-quinone reductase subunit E (198 aa).

The next 6 helical transmembrane spans lie at 11 to 31, 39 to 59, 77 to 97, 110 to 130, 140 to 160, and 176 to 196; these read SIFI…FLAV, FGLG…NNLV, FLNF…LEMV, GIFL…SFMV, IVYG…LAGI, and LGIT…FSGV.

It belongs to the NqrDE/RnfAE family. As to quaternary structure, composed of six subunits; NqrA, NqrB, NqrC, NqrD, NqrE and NqrF.

It is found in the cell inner membrane. It carries out the reaction a ubiquinone + n Na(+)(in) + NADH + H(+) = a ubiquinol + n Na(+)(out) + NAD(+). In terms of biological role, NQR complex catalyzes the reduction of ubiquinone-1 to ubiquinol by two successive reactions, coupled with the transport of Na(+) ions from the cytoplasm to the periplasm. NqrA to NqrE are probably involved in the second step, the conversion of ubisemiquinone to ubiquinol. The protein is Na(+)-translocating NADH-quinone reductase subunit E of Vibrio campbellii (strain ATCC BAA-1116).